Consider the following 210-residue polypeptide: Inner membrane-spanning protein YciB (210 aa).

Transmembrane regions (helical) follow at residues 12–32 (EVSP…FFFA), 53–73 (IFIA…ASWI), 78–98 (LPMM…LTLW), 115–135 (LFGA…GYVF), 148–168 (KLTI…EVIW), and 175–195 (FWVA…TLAQ).

Belongs to the YciB family.

The protein localises to the cell inner membrane. In terms of biological role, plays a role in cell envelope biogenesis, maintenance of cell envelope integrity and membrane homeostasis. This is Inner membrane-spanning protein YciB from Rhizobium meliloti (strain 1021) (Ensifer meliloti).